The sequence spans 204 residues: Thymidylate kinase (204 aa).

11–18 (GIDGAGKS) provides a ligand contact to ATP.

It belongs to the thymidylate kinase family.

It carries out the reaction dTMP + ATP = dTDP + ADP. In terms of biological role, phosphorylation of dTMP to form dTDP in both de novo and salvage pathways of dTTP synthesis. The polypeptide is Thymidylate kinase (Janthinobacterium sp. (strain Marseille) (Minibacterium massiliensis)).